A 204-amino-acid polypeptide reads, in one-letter code: Ras-related protein RabL (204 aa).

14-21 (GDSNVGKT) lines the GTP pocket. The Effector region motif lies at 36 to 44 (RPPSIGPDY). GTP is bound by residues 62 to 66 (DTCGQ) and 120 to 123 (TKSD). S-geranylgeranyl cysteine attachment occurs at residues Cys-203 and Cys-204.

It belongs to the small GTPase superfamily. Rab family.

The protein resides in the cell membrane. The protein is Ras-related protein RabL (rabL) of Dictyostelium discoideum (Social amoeba).